The chain runs to 199 residues: Hematopoietic prostaglandin D synthase (199 aa).

The 78-residue stretch at 2 to 79 (PNYKLLYFNM…YLTKNTDLAG (78 aa)) folds into the GST N-terminal domain. Residues tyrosine 8, arginine 14, tryptophan 39, 49–51 (GKI), and 63–64 (QS) contribute to the glutathione site. In terms of domain architecture, GST C-terminal spans 81–199 (TELEQCQVDA…WILKRPQTKL (119 aa)).

This sequence belongs to the GST superfamily. Sigma family. As to quaternary structure, homodimer. Requires glutathione as cofactor. Highly expressed in spleen and bone marrow. Lower levels of expression in small intestine, colon, liver, pancreas and skin. Not detected in brain, heart, lung or kidney (at protein level).

It localises to the cytoplasm. It carries out the reaction prostaglandin H2 = prostaglandin D2. The catalysed reaction is RX + glutathione = an S-substituted glutathione + a halide anion + H(+). It catalyses the reaction 2-glyceryl-prostaglandin H2 = 2-glyceryl-prostaglandin D2. In terms of biological role, bifunctional enzyme which catalyzes both the conversion of PGH2 to PGD2, a prostaglandin involved in smooth muscle contraction/relaxation and a potent inhibitor of platelet aggregation, and the conjugation of glutathione with a wide range of aryl halides and organic isothiocyanates. Also exhibits low glutathione-peroxidase activity towards cumene hydroperoxide. This is Hematopoietic prostaglandin D synthase from Rattus norvegicus (Rat).